The chain runs to 930 residues: GPI ethanolamine phosphate transferase 1 (930 aa).

Over 1–8 (MARLGRTG) the chain is Cytoplasmic. A helical transmembrane segment spans residues 9–29 (FLTLAVVFHLIYAYSIFDIYF). Residues 30-466 (VSPIVSGMRP…LQTYDWLFLR (437 aa)) lie on the Lumenal side of the membrane. An N-linked (GlcNAc...) asparagine glycan is attached at Asn-148. The helical transmembrane segment at 467–487 (TIVTFGYVGWIAYALTTVIHL) threads the bilayer. The Cytoplasmic segment spans residues 488–498 (HVLHGASESDR). A helical transmembrane segment spans residues 499 to 519 (TTASISFFSSVLVALFSVFLY). Residues 520–521 (QG) lie on the Lumenal side of the membrane. The chain crosses the membrane as a helical span at residues 522-542 (SPWRYYLYGFFPIFFWEEVFA). At 543–569 (RRKAFHAGRAGALLLPKRDLHSNKVED) the chain is on the cytoplasmic side. The chain crosses the membrane as a helical span at residues 570–590 (IDTITYGGAFMLLTGLLYLLF). The Lumenal segment spans residues 591 to 611 (EDEILGTSHQPAAVSRKGSRN). The helical transmembrane segment at 612-632 (IMGLQLGMVLLALIVTRSSAA) threads the bilayer. Topologically, residues 633–639 (SLQAKQG) are cytoplasmic. Residues 640–660 (LPFGNQVVGWGVLIASLLLPF) form a helical membrane-spanning segment. Residues 661-684 (AHRLYPNSHYLHRLMIIFLTFSPT) lie on the Lumenal side of the membrane. Residues 685-705 (FIILTISYEGLFYFAFCMTLV) form a helical membrane-spanning segment. The Cytoplasmic portion of the chain corresponds to 706-761 (TWVRLEHATYVYTAKPVAKQAQETIEPPKKANPGATTVVDGETYRFRTLTVSDARV). The chain crosses the membrane as a helical span at residues 762–782 (ALFFFFLLQSAFFSTGNIASI). The Lumenal segment spans residues 783-803 (SSFSLDSVYRLIPVFNPFSQG). The chain crosses the membrane as a helical span at residues 804-824 (ALLILKLLIPFAIISANLGIL). The Cytoplasmic portion of the chain corresponds to 825 to 833 (NRRLEVAPS). A helical membrane pass occupies residues 834-854 (ALFMVVMAISDVMTLNFFYMV). The Lumenal portion of the chain corresponds to 855-870 (RDEGSWLDIGTTISHF). The chain crosses the membrane as a helical span at residues 871–891 (CIASFLCTFVAGLEFLSEVFI). The Cytoplasmic segment spans residues 892-930 (SGVDFGLRTDAITASVPDIVNGITSKGQKDVPNGVEDKE).

The protein belongs to the PIGG/PIGN/PIGO family. PIGN subfamily.

It is found in the endoplasmic reticulum membrane. Its pathway is glycolipid biosynthesis; glycosylphosphatidylinositol-anchor biosynthesis. Functionally, ethanolamine phosphate transferase involved in glycosylphosphatidylinositol-anchor biosynthesis. Transfers ethanolamine phosphate to the first alpha-1,4-linked mannose of the glycosylphosphatidylinositol precursor of GPI-anchor. This chain is GPI ethanolamine phosphate transferase 1 (mcd4), found in Emericella nidulans (strain FGSC A4 / ATCC 38163 / CBS 112.46 / NRRL 194 / M139) (Aspergillus nidulans).